The chain runs to 299 residues: MLESHLIIYFLLAVIQFLLGTFTNGIIVVVNGIDLIKHRKMAPLDLLLSCLAVSRIFLQLFIFYINVVVIFLIEFITCSASCAFLVFVNELELWLATWLGVFYCAKVASVLHPLFIWLKMRISKSVPWMILGSLLYVSMICIFHIKYTGFMVPYFLRNLFFQNATIQTEVKQAIQIFSFVAELLVPLLIFLVAVLLLIFSLGRHTRQMRNTVAGSRVPGRGAHISALLSILSFLILYISHYLIKTFLSSLKFHVKRFVFLFCILVIGTYPSGHSLILILGNPKLKQNTKKFLCHSKCCQ.

At 1–9 the chain is on the extracellular side; it reads MLESHLIIY. The helical transmembrane segment at 10–30 threads the bilayer; that stretch reads FLLAVIQFLLGTFTNGIIVVV. The Cytoplasmic segment spans residues 31–55; sequence NGIDLIKHRKMAPLDLLLSCLAVSR. Residues 56 to 76 traverse the membrane as a helical segment; sequence IFLQLFIFYINVVVIFLIEFI. The Extracellular segment spans residues 77–81; that stretch reads TCSAS. A helical membrane pass occupies residues 82–102; it reads CAFLVFVNELELWLATWLGVF. The Cytoplasmic portion of the chain corresponds to 103 to 124; sequence YCAKVASVLHPLFIWLKMRISK. The chain crosses the membrane as a helical span at residues 125–145; sequence SVPWMILGSLLYVSMICIFHI. The Extracellular portion of the chain corresponds to 146-178; sequence KYTGFMVPYFLRNLFFQNATIQTEVKQAIQIFS. A glycan (N-linked (GlcNAc...) asparagine) is linked at N163. A helical membrane pass occupies residues 179 to 199; sequence FVAELLVPLLIFLVAVLLLIF. Topologically, residues 200–222 are cytoplasmic; sequence SLGRHTRQMRNTVAGSRVPGRGA. A helical transmembrane segment spans residues 223 to 243; that stretch reads HISALLSILSFLILYISHYLI. Over 244–257 the chain is Extracellular; that stretch reads KTFLSSLKFHVKRF. The chain crosses the membrane as a helical span at residues 258–278; that stretch reads VFLFCILVIGTYPSGHSLILI. Over 279–299 the chain is Cytoplasmic; it reads LGNPKLKQNTKKFLCHSKCCQ.

The protein belongs to the G-protein coupled receptor T2R family.

Its subcellular location is the membrane. Receptor that may play a role in the perception of bitterness and is gustducin-linked. May play a role in sensing the chemical composition of the gastrointestinal content. The activity of this receptor may stimulate alpha gustducin, mediate PLC-beta-2 activation and lead to the gating of TRPM5. This chain is Taste receptor type 2 member 1 (TAS2R1), found in Chlorocebus aethiops (Green monkey).